A 138-amino-acid chain; its full sequence is Small ribosomal subunit protein uS9c (138 aa).

It belongs to the universal ribosomal protein uS9 family.

It is found in the plastid. The protein resides in the chloroplast. This is Small ribosomal subunit protein uS9c (rps9) from Trieres chinensis (Marine centric diatom).